Consider the following 292-residue polypeptide: Ribosomal RNA small subunit methyltransferase A (292 aa).

Residues N28, L30, G55, E76, D101, and N126 each coordinate S-adenosyl-L-methionine.

This sequence belongs to the class I-like SAM-binding methyltransferase superfamily. rRNA adenine N(6)-methyltransferase family. RsmA subfamily.

The protein localises to the cytoplasm. It catalyses the reaction adenosine(1518)/adenosine(1519) in 16S rRNA + 4 S-adenosyl-L-methionine = N(6)-dimethyladenosine(1518)/N(6)-dimethyladenosine(1519) in 16S rRNA + 4 S-adenosyl-L-homocysteine + 4 H(+). Its function is as follows. Specifically dimethylates two adjacent adenosines (A1518 and A1519) in the loop of a conserved hairpin near the 3'-end of 16S rRNA in the 30S particle. May play a critical role in biogenesis of 30S subunits. The sequence is that of Ribosomal RNA small subunit methyltransferase A from Bacillus thuringiensis (strain Al Hakam).